We begin with the raw amino-acid sequence, 631 residues long: Probable sulfate transporter 3.3 (631 aa).

The Cytoplasmic portion of the chain corresponds to 1-69; that stretch reads MEVHKVVAPP…EYSFSLLKSD (69 aa). A helical transmembrane segment spans residues 70 to 90; sequence VVSGLTIASLAIPQGISYAKL. The Extracellular segment spans residues 91-92; sequence AN. A helical membrane pass occupies residues 93 to 113; it reads LPPIVGLYSSFVPPLVYAVLG. At 114 to 117 the chain is on the cytoplasmic side; sequence SSRD. The helical transmembrane segment at 118 to 138 threads the bilayer; the sequence is LAVGPVSIASLILGSMLRQQV. The Extracellular portion of the chain corresponds to 139 to 144; that stretch reads SPVDDP. A helical transmembrane segment spans residues 145–165; that stretch reads VLFLQLAFSSTFFAGLFQASL. At 166 to 171 the chain is on the cytoplasmic side; it reads GILRLG. Residues 172 to 192 traverse the membrane as a helical segment; sequence FIIDFLSKATLIGFMGGAAII. Over 193–223 the chain is Extracellular; the sequence is VSLQQLKGLLGITHFTKHMSVVPVLSSVFQH. The chain crosses the membrane as a helical span at residues 224 to 244; that stretch reads TNEWSWQTIVMGVCFLLFLLS. The Cytoplasmic segment spans residues 245-256; the sequence is TRHLSMKKPKLF. Residues 257 to 277 form a helical membrane-spanning segment; that stretch reads WVSAGAPLLSVIVSTLLVFVF. Residues 278-309 lie on the Extracellular side of the membrane; sequence RAERHGISVIGKLPEGLNPPSWNMLQFHGSHL. A helical membrane pass occupies residues 310-330; the sequence is ALVAKTGLVTGIVSLTEGIAV. Residues 331-347 lie on the Cytoplasmic side of the membrane; sequence GRTFAALKNYHVDGNKE. A helical membrane pass occupies residues 348–368; the sequence is MIAIGLMNVVGSATSCYVTTG. Residues 369–384 are Extracellular-facing; sequence AFSRSAVNNNAGAKTA. The chain crosses the membrane as a helical span at residues 385–405; the sequence is VSNIVMSVTVMVTLLFLMPLF. Topologically, residues 406–410 are cytoplasmic; the sequence is EYTPN. A helical transmembrane segment spans residues 411–431; the sequence is VVLGAIIVTAVIGLIDLPAAC. Topologically, residues 432–441 are extracellular; that stretch reads HIWKIDKFDF. The chain crosses the membrane as a helical span at residues 442-462; the sequence is LVMLCAFFGVIFLSVQNGLAI. At 463–631 the chain is on the cytoplasmic side; the sequence is AVGLSLFKIL…SLKGPSLSNV (169 aa). The 125-residue stretch at 497-621 folds into the STAS domain; the sequence is HYKEAQRIPG…LTVAEAVASL (125 aa).

This sequence belongs to the SLC26A/SulP transporter (TC 2.A.53) family. In terms of tissue distribution, expressed only in leaves.

The protein localises to the membrane. In terms of biological role, h(+)/sulfate cotransporter that may play a role in the regulation of sulfate assimilation. This is Probable sulfate transporter 3.3 (SULTR3;3) from Arabidopsis thaliana (Mouse-ear cress).